Here is a 42-residue protein sequence, read N- to C-terminus: Purine nucleoside phosphorylase DeoD-type (42 aa).

Residue 8 to 9 (SD) coordinates a purine D-ribonucleoside. Catalysis depends on Asp-9, which acts as the Proton donor.

The protein belongs to the PNP/UDP phosphorylase family. In terms of assembly, homohexamer; trimer of homodimers.

The catalysed reaction is a purine D-ribonucleoside + phosphate = a purine nucleobase + alpha-D-ribose 1-phosphate. It carries out the reaction a purine 2'-deoxy-D-ribonucleoside + phosphate = a purine nucleobase + 2-deoxy-alpha-D-ribose 1-phosphate. Functionally, catalyzes the reversible phosphorolytic breakdown of the N-glycosidic bond in the beta-(deoxy)ribonucleoside molecules, with the formation of the corresponding free purine bases and pentose-1-phosphate. This Mycoplasmoides pirum (Mycoplasma pirum) protein is Purine nucleoside phosphorylase DeoD-type.